Reading from the N-terminus, the 331-residue chain is DNA-directed RNA polymerase subunit alpha (331 aa).

Positions 1 to 223 are alpha N-terminal domain (alpha-NTD); that stretch reads MDQKRPQLKA…DELTVFGNVE (223 aa). The alpha C-terminal domain (alpha-CTD) stretch occupies residues 260 to 331; it reads PYPADLDTPR…LAQFGLALRD (72 aa).

It belongs to the RNA polymerase alpha chain family. As to quaternary structure, homodimer. The RNAP catalytic core consists of 2 alpha, 1 beta, 1 beta' and 1 omega subunit. When a sigma factor is associated with the core the holoenzyme is formed, which can initiate transcription.

It carries out the reaction RNA(n) + a ribonucleoside 5'-triphosphate = RNA(n+1) + diphosphate. In terms of biological role, DNA-dependent RNA polymerase catalyzes the transcription of DNA into RNA using the four ribonucleoside triphosphates as substrates. This is DNA-directed RNA polymerase subunit alpha from Deinococcus geothermalis (strain DSM 11300 / CIP 105573 / AG-3a).